A 384-amino-acid chain; its full sequence is S-adenosylmethionine synthase (384 aa).

Histidine 15 contributes to the ATP binding site. Aspartate 17 contacts Mg(2+). Glutamate 43 contacts K(+). Glutamate 56 and glutamine 99 together coordinate L-methionine. A flexible loop region spans residues 99-109; that stretch reads QSPDINQGVDR. ATP is bound by residues 164 to 166, 230 to 231, aspartate 239, 245 to 246, alanine 262, and lysine 266; these read DAK, RF, and RK. Aspartate 239 is an L-methionine binding site. Position 270 (lysine 270) interacts with L-methionine.

This sequence belongs to the AdoMet synthase family. As to quaternary structure, homotetramer; dimer of dimers. It depends on Mg(2+) as a cofactor. Requires K(+) as cofactor.

Its subcellular location is the cytoplasm. The enzyme catalyses L-methionine + ATP + H2O = S-adenosyl-L-methionine + phosphate + diphosphate. The protein operates within amino-acid biosynthesis; S-adenosyl-L-methionine biosynthesis; S-adenosyl-L-methionine from L-methionine: step 1/1. Catalyzes the formation of S-adenosylmethionine (AdoMet) from methionine and ATP. The overall synthetic reaction is composed of two sequential steps, AdoMet formation and the subsequent tripolyphosphate hydrolysis which occurs prior to release of AdoMet from the enzyme. This Erwinia tasmaniensis (strain DSM 17950 / CFBP 7177 / CIP 109463 / NCPPB 4357 / Et1/99) protein is S-adenosylmethionine synthase.